We begin with the raw amino-acid sequence, 331 residues long: Aldo-keto reductase YhdN (331 aa).

Residues 20-21 (TW) and Asp52 each bind NADP(+). The Proton donor role is filled by Tyr57. Residues Gln175, 203–208 (YGSLCR), Lys214, Arg227, 280–282 (GAR), and Gln286 each bind NADP(+).

This sequence belongs to the aldo/keto reductase family. Aldo/keto reductase 11 subfamily. Monomer.

Its function is as follows. Aldo-keto reductase (AKR) that displays broad substrate specificity in vitro. Is able to reduce the standard AKR substrates DL-glyceraldehyde, D-erythrose, methylglyoxal, p-nitrobenzaldehyde, benzaldehyde and butyraldehyde, in the presence of NADPH. Cannot use NADH as a cosubstrate. Does not act on glucose, 2-pyridine carboxyaldehyde, fructose and xylose. The physiological function of this enzyme is not clear. May play a role in bacterial stress response and/or in detoxification of reactive aldehydes. This chain is Aldo-keto reductase YhdN (yhdN), found in Bacillus subtilis (strain 168).